A 626-amino-acid chain; its full sequence is DNA-directed RNA polymerase subunit gamma (626 aa).

Zn(2+)-binding residues include Cys71, Cys73, Cys86, and Cys89. 3 residues coordinate Mg(2+): Asp467, Asp469, and Asp471.

This sequence belongs to the RNA polymerase beta' chain family. RpoC1 subfamily. As to quaternary structure, in cyanobacteria the RNAP catalytic core is composed of 2 alpha, 1 beta, 1 beta', 1 gamma and 1 omega subunit. When a sigma factor is associated with the core the holoenzyme is formed, which can initiate transcription. Mg(2+) is required as a cofactor. Requires Zn(2+) as cofactor.

The catalysed reaction is RNA(n) + a ribonucleoside 5'-triphosphate = RNA(n+1) + diphosphate. Functionally, DNA-dependent RNA polymerase catalyzes the transcription of DNA into RNA using the four ribonucleoside triphosphates as substrates. The sequence is that of DNA-directed RNA polymerase subunit gamma from Microcystis aeruginosa (strain NIES-843 / IAM M-2473).